The chain runs to 333 residues: Tetraacyldisaccharide 4'-kinase (333 aa).

Position 55-62 (55-62 (TAGGNGKT)) interacts with ATP.

This sequence belongs to the LpxK family.

The enzyme catalyses a lipid A disaccharide + ATP = a lipid IVA + ADP + H(+). It functions in the pathway glycolipid biosynthesis; lipid IV(A) biosynthesis; lipid IV(A) from (3R)-3-hydroxytetradecanoyl-[acyl-carrier-protein] and UDP-N-acetyl-alpha-D-glucosamine: step 6/6. Transfers the gamma-phosphate of ATP to the 4'-position of a tetraacyldisaccharide 1-phosphate intermediate (termed DS-1-P) to form tetraacyldisaccharide 1,4'-bis-phosphate (lipid IVA). The protein is Tetraacyldisaccharide 4'-kinase of Pectobacterium atrosepticum (strain SCRI 1043 / ATCC BAA-672) (Erwinia carotovora subsp. atroseptica).